Consider the following 329-residue polypeptide: Ficolin-2 (329 aa).

The first 29 residues, 1-29, serve as a signal peptide directing secretion; sequence MELGGAAGALGPSGPLLVCLCFGTLAAQA. Residues 52–111 form the Collagen-like domain; the sequence is GCPGLPGAPGLKGETGAAGLKGERGLPGVPGKAGPAGPKGSTGAQGEKGARGEKGESGQL. Positions 64-113 are disordered; the sequence is GETGAAGLKGERGLPGVPGKAGPAGPKGSTGAQGEKGARGEKGESGQLHS. Residues 77 to 90 show a composition bias toward low complexity; sequence LPGVPGKAGPAGPK. Residues 112 to 329 enclose the Fibrinogen C-terminal domain; that stretch reads HSCATGPRTC…KVSEMKLRLT (218 aa). 2 cysteine pairs are disulfide-bonded: cysteine 114-cysteine 142 and cysteine 121-cysteine 149. Residues aspartate 265, aspartate 267, serine 269, and serine 271 each contribute to the Ca(2+) site. A disulfide bond links cysteine 273 and cysteine 286. An N-linked (GlcNAc...) asparagine glycan is attached at asparagine 316.

The protein belongs to the ficolin lectin family. In terms of assembly, homotrimer. Interacts with elastin. Interacts with MASP1 and MASP2.

The protein resides in the secreted. Its function is as follows. May function in innate immunity through activation of the lectin complement pathway. Calcium-dependent and GlcNAc-binding lectin. The protein is Ficolin-2 (FCN2) of Bos taurus (Bovine).